A 495-amino-acid chain; its full sequence is Heat stress transcription factor A-1a (495 aa).

A DNA-binding region spans residues 50 to 144 (PPPFLSKTYD…LLKKISRRKS (95 aa)). The disordered stretch occupies residues 140 to 164 (SRRKSVQGHGSSSSNPQSQQLSQGQ). Residues 146–164 (QGHGSSSSNPQSQQLSQGQ) show a composition bias toward low complexity. Residues 172-238 (SCVEVGKFGL…QIMSFLAKAV (67 aa)) form a hydrophobic repeat HR-A/B region. Residues 255–288 (NMHVTEANKKRRLREDSTAATESNSHSHSLEASD) form a disordered region. Positions 262 to 268 (NKKRRLR) match the Nuclear localization signal motif. A compositionally biased stretch (polar residues) spans 272–281 (TAATESNSHS). Residues 433-442 (FEFLEEYMPE) carry the AHA motif. The interval 445–477 (VFGDATTLENNNNNNNNNNNNNNNNNNNNTNGR) is disordered. The segment covering 454 to 473 (NNNNNNNNNNNNNNNNNNNN) has biased composition (low complexity). The Nuclear export signal signature appears at 482–489 (LIEELGLL).

Belongs to the HSF family. Class A subfamily. Homotrimer. Interacts with HSP70-1 and HSP70-4. Binds to CRK1. Binds to HSBP. Post-translationally, exhibits temperature-dependent phosphorylation. Phosphorylated by CRK1. Constitutively expressed.

It is found in the cytoplasm. The protein localises to the nucleus. Functionally, transcriptional activator that specifically binds DNA sequence 5'-AGAAnnTTCT-3' known as heat shock promoter elements (HSE). This chain is Heat stress transcription factor A-1a (HSFA1A), found in Arabidopsis thaliana (Mouse-ear cress).